A 67-amino-acid chain; its full sequence is uncharacterized protein (67 aa).

This is an uncharacterized protein from Salmonella typhimurium (Bacteriophage P22).